The following is a 90-amino-acid chain: Large ribosomal subunit protein bL27 (90 aa).

A disordered region spans residues 1–21; the sequence is MAHKKAGGSSRNGRDSHGKRL.

Belongs to the bacterial ribosomal protein bL27 family.

The chain is Large ribosomal subunit protein bL27 from Nitrobacter winogradskyi (strain ATCC 25391 / DSM 10237 / CIP 104748 / NCIMB 11846 / Nb-255).